Here is a 433-residue protein sequence, read N- to C-terminus: Mitochondrial inner membrane protein OXA1L (433 aa).

Residues 1 to 108 (MARNLVCGRW…QCATEPSFTE (108 aa)) are Mitochondrial intermembrane-facing. Residues 109–129 (LGLGSYTPVGLIQNLLEYIHV) traverse the membrane as a helical segment. Residues 130–134 (DLGLP) are Mitochondrial matrix-facing. The chain crosses the membrane as a helical span at residues 135–155 (WWGAIATCTVLARCLVFPLIV). Residues 156-207 (KGQREAAKIHNHMPEMQKFSARIREAKLAGDQAEFYKATIEMTRYQKKHDIK) are Mitochondrial intermembrane-facing. Residues 208–228 (LLRPLILPLTQAPVFISFFIA) traverse the membrane as a helical segment. Over 229–255 (LREMANLPVPSLQTGGLWWFQDLTVSD) the chain is Mitochondrial matrix. A helical transmembrane segment spans residues 256–276 (PIYVLPLVVTATMWCVLELGA). The Mitochondrial intermembrane portion of the chain corresponds to 277–293 (ETGVQSNDLQFMRNIIR). Residues 294–314 (VMPLVVLPVTIHFPSAVFMYW) traverse the membrane as a helical segment. At 315-433 (LSSNVFSLCQ…AKKPWQDTLG (119 aa)) the chain is on the mitochondrial matrix side. S359 is subject to Phosphoserine. 2 positions are modified to phosphothreonine: T395 and T397. Positions 397 to 433 (THNPLLQHDPSHPPKAPNSNNSSIKANAKKPWQDTLG) are disordered. Over residues 413–426 (PNSNNSSIKANAKK) the composition is skewed to low complexity.

The protein belongs to the OXA1/ALB3/YidC family. As to quaternary structure, monomer; predominantly monomeric at low salt concentrations. Homooligomer; predominantly homooligomeric at high salt concentrations. Associates with the mitochondrial ribosome. Associates preferentially as a dimer with the large ribosomal subunit 39S of the mitochondrial ribosome. Interacts with OXA1L; promoting cotranslational quality control in mitochondria.

Its subcellular location is the mitochondrion inner membrane. Its function is as follows. Mitochondrial membrane insertase that mediates the cotranslational insertion of integral membrane proteins into the mitochondrial inner membrane. Essential for the activity and assembly of cytochrome oxidase. Required for the correct biogenesis of ATP synthase and complex I in mitochondria. The chain is Mitochondrial inner membrane protein OXA1L (Oxa1l) from Mus musculus (Mouse).